We begin with the raw amino-acid sequence, 337 residues long: D-alanine--D-alanine ligase (337 aa).

The 207-residue stretch at 124–330 folds into the ATP-grasp domain; sequence KMWFSALGIP…FTEYLSLVIN (207 aa). 154 to 209 is an ATP binding site; that stretch reads ALAQWGSIFVKAASQGSSVGCYKVDDSAKVAGVLKDAFGYAPYVIVEKTIKARELE. Mg(2+) contacts are provided by aspartate 284, glutamate 297, and asparagine 299.

The protein belongs to the D-alanine--D-alanine ligase family. It depends on Mg(2+) as a cofactor. Mn(2+) is required as a cofactor.

The protein resides in the cytoplasm. It carries out the reaction 2 D-alanine + ATP = D-alanyl-D-alanine + ADP + phosphate + H(+). Its pathway is cell wall biogenesis; peptidoglycan biosynthesis. In terms of biological role, cell wall formation. This is D-alanine--D-alanine ligase from Shewanella baltica (strain OS223).